The sequence spans 417 residues: Serine hydroxymethyltransferase (417 aa).

(6S)-5,6,7,8-tetrahydrofolate is bound by residues L121 and 125-127; that span reads GHL. K229 bears the N6-(pyridoxal phosphate)lysine mark. Position 355-357 (355-357) interacts with (6S)-5,6,7,8-tetrahydrofolate; that stretch reads SPF.

Belongs to the SHMT family. As to quaternary structure, homodimer. Requires pyridoxal 5'-phosphate as cofactor.

The protein resides in the cytoplasm. It carries out the reaction (6R)-5,10-methylene-5,6,7,8-tetrahydrofolate + glycine + H2O = (6S)-5,6,7,8-tetrahydrofolate + L-serine. It functions in the pathway one-carbon metabolism; tetrahydrofolate interconversion. Its pathway is amino-acid biosynthesis; glycine biosynthesis; glycine from L-serine: step 1/1. Catalyzes the reversible interconversion of serine and glycine with tetrahydrofolate (THF) serving as the one-carbon carrier. This reaction serves as the major source of one-carbon groups required for the biosynthesis of purines, thymidylate, methionine, and other important biomolecules. Also exhibits THF-independent aldolase activity toward beta-hydroxyamino acids, producing glycine and aldehydes, via a retro-aldol mechanism. The chain is Serine hydroxymethyltransferase from Salmonella schwarzengrund (strain CVM19633).